We begin with the raw amino-acid sequence, 77 residues long: Sec-independent protein translocase protein TatA (77 aa).

The helical transmembrane segment at 1-21 (MGSLSIWHWILVIAVVLLLFG) threads the bilayer. Basic and acidic residues predominate over residues 42-60 (GMQDDDKPADKPEPAKSIE). The segment at 42-77 (GMQDDDKPADKPEPAKSIEHNAAPTAARSDVGSKAV) is disordered.

The protein belongs to the TatA/E family. As to quaternary structure, the Tat system comprises two distinct complexes: a TatABC complex, containing multiple copies of TatA, TatB and TatC subunits, and a separate TatA complex, containing only TatA subunits. Substrates initially bind to the TatABC complex, which probably triggers association of the separate TatA complex to form the active translocon.

It is found in the cell inner membrane. Its function is as follows. Part of the twin-arginine translocation (Tat) system that transports large folded proteins containing a characteristic twin-arginine motif in their signal peptide across membranes. TatA could form the protein-conducting channel of the Tat system. In Bradyrhizobium diazoefficiens (strain JCM 10833 / BCRC 13528 / IAM 13628 / NBRC 14792 / USDA 110), this protein is Sec-independent protein translocase protein TatA.